Consider the following 155-residue polypeptide: Putative methyl-CpG-binding domain protein 12 (155 aa).

The CW-type zinc-finger motif lies at 1–53 (MVQCTDCKKWRLIPSMQHYNIIKETQLQTPFVCGTTSGWTPNMSCNVPQDGTT). The MBD-associated domain (MAD) signature appears at 3–45 (QCTDCKKWRLIPSMQHYNIIKETQLQTPFVCGTTSGWTPNMSC). 4 residues coordinate Zn(2+): Cys4, Cys7, Cys33, and Cys45. An MBD domain is found at 53-126 (TCDTWPSIPP…SQFSFQIPKP (74 aa)). The tract at residues 130-155 (NYVKKRTRPVKRRKSSKDNNCEKGKK) is disordered. A compositionally biased stretch (basic residues) spans 133–144 (KKRTRPVKRRKS). Positions 140-147 (KRRKSSKD) match the Nuclear localization signal motif. Basic and acidic residues predominate over residues 145 to 155 (SKDNNCEKGKK).

The protein resides in the nucleus. In terms of biological role, probable transcriptional regulator. In Arabidopsis thaliana (Mouse-ear cress), this protein is Putative methyl-CpG-binding domain protein 12 (MBD12).